The chain runs to 186 residues: UPF0157 protein SCO7215 (186 aa).

The protein belongs to the UPF0157 (GrpB) family.

This is UPF0157 protein SCO7215 from Streptomyces coelicolor (strain ATCC BAA-471 / A3(2) / M145).